The chain runs to 301 residues: Acetylglutamate kinase (301 aa).

Substrate-binding positions include 70-71 (GG), arginine 92, and asparagine 185.

It belongs to the acetylglutamate kinase family. ArgB subfamily.

It localises to the cytoplasm. It carries out the reaction N-acetyl-L-glutamate + ATP = N-acetyl-L-glutamyl 5-phosphate + ADP. It functions in the pathway amino-acid biosynthesis; L-arginine biosynthesis; N(2)-acetyl-L-ornithine from L-glutamate: step 2/4. Its function is as follows. Catalyzes the ATP-dependent phosphorylation of N-acetyl-L-glutamate. This Synechococcus elongatus (strain ATCC 33912 / PCC 7942 / FACHB-805) (Anacystis nidulans R2) protein is Acetylglutamate kinase.